The following is an 80-amino-acid chain: UPF0181 protein SG1330 (80 aa).

The segment at 58-80 is disordered; sequence TEVLETPAARAETDPYDSNPDDD.

Belongs to the UPF0181 family.

The polypeptide is UPF0181 protein SG1330 (Sodalis glossinidius (strain morsitans)).